The chain runs to 90 residues: Exodeoxyribonuclease 7 small subunit (90 aa).

Positions 62–90 (QDGQANPMSSQGHTAGEYPDDEAEEAEEA) are disordered. The span at 64-74 (GQANPMSSQGH) shows a compositional bias: polar residues. Over residues 79 to 90 (YPDDEAEEAEEA) the composition is skewed to acidic residues.

The protein belongs to the XseB family. In terms of assembly, heterooligomer composed of large and small subunits.

It localises to the cytoplasm. The enzyme catalyses Exonucleolytic cleavage in either 5'- to 3'- or 3'- to 5'-direction to yield nucleoside 5'-phosphates.. Functionally, bidirectionally degrades single-stranded DNA into large acid-insoluble oligonucleotides, which are then degraded further into small acid-soluble oligonucleotides. The protein is Exodeoxyribonuclease 7 small subunit of Desulfovibrio desulfuricans (strain ATCC 27774 / DSM 6949 / MB).